The chain runs to 613 residues: Probable LRR receptor-like serine/threonine-protein kinase At5g10290 (613 aa).

The first 31 residues, 1–31 (MRMFSLQKMAMAFTLLFFACLCSFVSPDAQG), serve as a signal peptide directing secretion. The Extracellular portion of the chain corresponds to 32 to 225 (DALFALRISL…SGDSSKPKTG (194 aa)). N-linked (GlcNAc...) asparagine glycans are attached at residues Asn81 and Asn116. LRR repeat units lie at residues 95–117 (NLKT…FGNL), 119–141 (SLTS…IGNL), 143–166 (KLQF…TGLP), and 167–189 (NLLN…LFEI). Residue Asn155 is glycosylated (N-linked (GlcNAc...) asparagine). Residue Asn193 is glycosylated (N-linked (GlcNAc...) asparagine). Residues 226–246 (IIAGVVAGVTVVLFGILLFLF) form a helical membrane-spanning segment. Residues 247–613 (CKDRHKGYRR…QDAIELSGGR (367 aa)) are Cytoplasmic-facing. Phosphothreonine is present on Thr287. The region spanning 290-569 (FSEKNVLGQG…VVRMLEGEGL (280 aa)) is the Protein kinase domain. 296–304 (LGQGGFGKV) contributes to the ATP binding site. Thr313 is subject to Phosphothreonine. Residue Lys318 coordinates ATP. Ser371 carries the phosphoserine modification. Thr390 bears the Phosphothreonine mark. The active-site Proton acceptor is the Asp417. Residues Thr450, Thr451, and Thr456 each carry the phosphothreonine modification. Position 464 is a phosphotyrosine (Tyr464). Ser466 carries the phosphoserine modification. A Phosphothreonine modification is found at Thr467. Residue Ser471 is modified to Phosphoserine. Position 547 is a phosphothreonine (Thr547).

This sequence belongs to the protein kinase superfamily. Ser/Thr protein kinase family.

It is found in the cell membrane. The catalysed reaction is L-seryl-[protein] + ATP = O-phospho-L-seryl-[protein] + ADP + H(+). It carries out the reaction L-threonyl-[protein] + ATP = O-phospho-L-threonyl-[protein] + ADP + H(+). The sequence is that of Probable LRR receptor-like serine/threonine-protein kinase At5g10290 from Arabidopsis thaliana (Mouse-ear cress).